The primary structure comprises 252 residues: MFYDFVPQSRFLLGTAGYPSPQILQQAIEASGSEIITVSLRREGSQGGAFRALLTQLNKRVLPNTAGCHTVKEAVTTAYMARELFNTRWIKLEVIGHADTLQPDPFALVEAARILCADGFQVFPYTTEDLILGEKLLEAGCKLLMPWGAPIGSGQGLRNIEGLRSMRSWFKDIPLIIDAGIGAPSQAAQAMEMGFDGILLNTAVARAQDPLGMAQAFASAIRAGYDARSAGLIERRDMATASTPIFGMAQFS.

Residue Lys-91 is the Schiff-base intermediate with DXP of the active site. 1-deoxy-D-xylulose 5-phosphate-binding positions include Gly-152, 179-180 (AG), and 201-202 (NT).

The protein belongs to the ThiG family. Homotetramer. Forms heterodimers with either ThiH or ThiS.

It is found in the cytoplasm. It catalyses the reaction [ThiS sulfur-carrier protein]-C-terminal-Gly-aminoethanethioate + 2-iminoacetate + 1-deoxy-D-xylulose 5-phosphate = [ThiS sulfur-carrier protein]-C-terminal Gly-Gly + 2-[(2R,5Z)-2-carboxy-4-methylthiazol-5(2H)-ylidene]ethyl phosphate + 2 H2O + H(+). Its pathway is cofactor biosynthesis; thiamine diphosphate biosynthesis. Functionally, catalyzes the rearrangement of 1-deoxy-D-xylulose 5-phosphate (DXP) to produce the thiazole phosphate moiety of thiamine. Sulfur is provided by the thiocarboxylate moiety of the carrier protein ThiS. In vitro, sulfur can be provided by H(2)S. The polypeptide is Thiazole synthase (Erwinia amylovora (Fire blight bacteria)).